We begin with the raw amino-acid sequence, 430 residues long: Sulfide-quinone reductase (430 aa).

Residues 9–13 (GGGVG), 34–36 (SDR), 42–43 (TP), and threonine 105 contribute to the FAD site. Catalysis depends on cysteine 156, which acts as the Cysteine persulfide intermediate. Intrachain disulfides connect cysteine 280–cysteine 422 and cysteine 419–cysteine 430. 2 residues coordinate FAD: valine 294 and glycine 314. Position 346 (isoleucine 346) interacts with a quinone. Cysteine 347 functions as the Cysteine persulfide intermediate in the catalytic mechanism. Lysine 382 serves as a coordination point for FAD.

The protein belongs to the SQRD family. Homotrimer. FAD is required as a cofactor.

The protein localises to the membrane. The enzyme catalyses n a quinone + n hydrogen sulfide + n H(+) = polysulfur(n-2) + n a quinol. In terms of biological role, catalyzes the oxidation of hydrogen sulfide, with the help of a quinone. Consecutive reaction cycles lead to the accumulation of a polysulfide product on the active site Cys residues; these products are released when they exceed a critical length, typically as cyclooctasulfur. In Aquifex aeolicus (strain VF5), this protein is Sulfide-quinone reductase.